Reading from the N-terminus, the 206-residue chain is Superoxide dismutase [Mn] (206 aa).

Mn(2+)-binding residues include His30, His78, Asp166, and His170.

The protein belongs to the iron/manganese superoxide dismutase family. As to quaternary structure, homodimer. Requires Mn(2+) as cofactor.

It carries out the reaction 2 superoxide + 2 H(+) = H2O2 + O2. In terms of biological role, destroys superoxide anion radicals which are normally produced within the cells and which are toxic to biological systems. This is Superoxide dismutase [Mn] (sodA) from Chlamydia trachomatis serovar D (strain ATCC VR-885 / DSM 19411 / UW-3/Cx).